Here is a 360-residue protein sequence, read N- to C-terminus: Vitopine synthase (360 aa).

This sequence belongs to the lysopine/nopaline/octopine/opine/vitopine dehydrogenases family.

This Allorhizobium ampelinum (strain ATCC BAA-846 / DSM 112012 / S4) (Agrobacterium vitis (strain S4)) protein is Vitopine synthase (vis).